Here is a 172-residue protein sequence, read N- to C-terminus: MISDLRSSILPPLKWLSDQDPPVPAGVSDWLMELGSMTRRFENHCTCIRIEPQRECFITRDNLKEEAAHLPNSTCYWLREVILMGDNQPWLLGRTVIPQETLFEHNEALINLGTVPLGRYLFSSGNLTRDYIYIGRQGALWARRSRLRLAGKPLLLTELFLAASPLYTTNSI.

4 residues coordinate substrate: methionine 37, arginine 79, leucine 117, and glutamate 158.

The protein belongs to the UbiC family.

It localises to the cytoplasm. It carries out the reaction chorismate = 4-hydroxybenzoate + pyruvate. It participates in cofactor biosynthesis; ubiquinone biosynthesis. Functionally, removes the pyruvyl group from chorismate, with concomitant aromatization of the ring, to provide 4-hydroxybenzoate (4HB) for the ubiquinone pathway. The chain is Probable chorismate pyruvate-lyase from Bartonella quintana (strain Toulouse) (Rochalimaea quintana).